The sequence spans 236 residues: tRNA1(Val) (adenine(37)-N6)-methyltransferase (236 aa).

It belongs to the methyltransferase superfamily. tRNA (adenine-N(6)-)-methyltransferase family.

The protein localises to the cytoplasm. The enzyme catalyses adenosine(37) in tRNA1(Val) + S-adenosyl-L-methionine = N(6)-methyladenosine(37) in tRNA1(Val) + S-adenosyl-L-homocysteine + H(+). Specifically methylates the adenine in position 37 of tRNA(1)(Val) (anticodon cmo5UAC). The sequence is that of tRNA1(Val) (adenine(37)-N6)-methyltransferase from Shewanella sp. (strain MR-4).